The chain runs to 129 residues: Small ribosomal subunit protein uS11 (129 aa).

It belongs to the universal ribosomal protein uS11 family. As to quaternary structure, part of the 30S ribosomal subunit. Interacts with proteins S7 and S18. Binds to IF-3.

Functionally, located on the platform of the 30S subunit, it bridges several disparate RNA helices of the 16S rRNA. Forms part of the Shine-Dalgarno cleft in the 70S ribosome. This is Small ribosomal subunit protein uS11 from Vibrio atlanticus (strain LGP32) (Vibrio splendidus (strain Mel32)).